A 656-amino-acid polypeptide reads, in one-letter code: Acetyl-coenzyme A synthetase (656 aa).

CoA-binding positions include 198-201 (RGGR) and threonine 316. Residues 392–394 (GEP), 416–421 (DTFWQT), aspartate 507, and arginine 522 each bind ATP. Position 530 (serine 530) interacts with CoA. Position 533 (arginine 533) interacts with ATP. Valine 544, histidine 546, and valine 549 together coordinate Mg(2+). Arginine 591 serves as a coordination point for CoA. Lysine 616 is modified (N6-acetyllysine).

The protein belongs to the ATP-dependent AMP-binding enzyme family. Mg(2+) serves as cofactor. In terms of processing, acetylated. Deacetylation by the SIR2-homolog deacetylase activates the enzyme.

It carries out the reaction acetate + ATP + CoA = acetyl-CoA + AMP + diphosphate. Functionally, catalyzes the conversion of acetate into acetyl-CoA (AcCoA), an essential intermediate at the junction of anabolic and catabolic pathways. AcsA undergoes a two-step reaction. In the first half reaction, AcsA combines acetate with ATP to form acetyl-adenylate (AcAMP) intermediate. In the second half reaction, it can then transfer the acetyl group from AcAMP to the sulfhydryl group of CoA, forming the product AcCoA. In Rhodobacter capsulatus (strain ATCC BAA-309 / NBRC 16581 / SB1003), this protein is Acetyl-coenzyme A synthetase.